The chain runs to 217 residues: NADPH-dependent 3-demethoxyubiquinone 3-hydroxylase, mitochondrial (217 aa).

2 repeat units span residues 49-130 (IIER…SALM) and 131-217 (GKEA…STRV). Residues 49–217 (IIERIIRVDH…KTAIWLSTRV (169 aa)) are 2 X approximate tandem repeats. An NADH-binding site is contributed by arginine 52. Residues glutamate 61, glutamate 91, histidine 94, glutamate 143, glutamate 178, and histidine 181 each coordinate Fe cation. Residue arginine 216 coordinates NADH.

This sequence belongs to the COQ7 family. As to quaternary structure, component of a multi-subunit COQ enzyme complex. Requires Fe cation as cofactor.

It is found in the mitochondrion inner membrane. The catalysed reaction is a 5-methoxy-2-methyl-3-(all-trans-polyprenyl)benzoquinone + NADH + O2 = a 3-demethylubiquinone + NAD(+) + H2O. Its pathway is cofactor biosynthesis; ubiquinone biosynthesis. In terms of biological role, catalyzes the hydroxylation of the 5-methoxy-2-methyl-3-(all-trans-polyprenyl)benzoquinone at the C6 position and participates in the biosynthesis of ubiquinone. Catalyzes the reaction through a substrate-mediated reduction pathway, whereby NADH shuttles electrons to 5-methoxy-2-methyl-3-(all-trans-decaprenyl)benzoquinone, which then transfers the electrons to the two Fe(3+) centers. The binding of 5-methoxy-2-methyl-3-(all-trans-polyprenyl)benzoquinone (DMQn) mediates reduction of the diiron center by nicotinamide adenine dinucleotide (NADH) and initiates oxygen activation for subsequent DMQ hydroxylation. Also has a structural role in the COQ enzyme complex, stabilizing other COQ polypeptides. The sequence is that of NADPH-dependent 3-demethoxyubiquinone 3-hydroxylase, mitochondrial from Dictyostelium discoideum (Social amoeba).